The primary structure comprises 311 residues: Pyrimidine-specific ribonucleoside hydrolase RihA (311 aa).

The active site involves His240.

Belongs to the IUNH family. RihA subfamily.

Functionally, hydrolyzes with equal efficiency cytidine or uridine to ribose and cytosine or uracil, respectively. This Escherichia coli O81 (strain ED1a) protein is Pyrimidine-specific ribonucleoside hydrolase RihA.